The chain runs to 180 residues: MSRVGRLPIAVPAGITVTVTPDNVVTVKGPKGELVKTMHKDINIAVENNEVIVTRPSDQKAHRALHGLTRALINNMVIGVNEGYQKTLELVGVGYRAQLQGKKLVMNLGYSHPVEIEPIEGITFETPAATKVIVKGIDKEKVGAAAADIRKWRLPEPYKGKGIKFENEVIRRKEGKTGKK.

The protein belongs to the universal ribosomal protein uL6 family. As to quaternary structure, part of the 50S ribosomal subunit.

This protein binds to the 23S rRNA, and is important in its secondary structure. It is located near the subunit interface in the base of the L7/L12 stalk, and near the tRNA binding site of the peptidyltransferase center. In Clostridium botulinum (strain Eklund 17B / Type B), this protein is Large ribosomal subunit protein uL6.